We begin with the raw amino-acid sequence, 348 residues long: Phosphate acyltransferase (348 aa).

This sequence belongs to the PlsX family. As to quaternary structure, homodimer. Probably interacts with PlsY.

The protein resides in the cytoplasm. It carries out the reaction a fatty acyl-[ACP] + phosphate = an acyl phosphate + holo-[ACP]. The protein operates within lipid metabolism; phospholipid metabolism. Catalyzes the reversible formation of acyl-phosphate (acyl-PO(4)) from acyl-[acyl-carrier-protein] (acyl-ACP). This enzyme utilizes acyl-ACP as fatty acyl donor, but not acyl-CoA. This is Phosphate acyltransferase from Rhizobium etli (strain ATCC 51251 / DSM 11541 / JCM 21823 / NBRC 15573 / CFN 42).